Reading from the N-terminus, the 304-residue chain is UDP-N-acetylenolpyruvoylglucosamine reductase (304 aa).

Residues 33–212 (MGGLADLFLI…KEMMDDLTHK (180 aa)) form the FAD-binding PCMH-type domain. Residue Arg-176 is part of the active site. Ser-226 functions as the Proton donor in the catalytic mechanism. Glu-296 is an active-site residue.

Belongs to the MurB family. The cofactor is FAD.

The protein resides in the cytoplasm. The enzyme catalyses UDP-N-acetyl-alpha-D-muramate + NADP(+) = UDP-N-acetyl-3-O-(1-carboxyvinyl)-alpha-D-glucosamine + NADPH + H(+). It functions in the pathway cell wall biogenesis; peptidoglycan biosynthesis. Cell wall formation. This Exiguobacterium sibiricum (strain DSM 17290 / CCUG 55495 / CIP 109462 / JCM 13490 / 255-15) protein is UDP-N-acetylenolpyruvoylglucosamine reductase.